We begin with the raw amino-acid sequence, 1336 residues long: Cytokinesis protein sepH (1336 aa).

The segment covering methionine 1–glutamate 10 has biased composition (low complexity). Residues methionine 1–valine 46 are disordered. The span at lysine 36–valine 46 shows a compositional bias: basic and acidic residues. Residues tyrosine 59 to isoleucine 309 form the Protein kinase domain. ATP-binding positions include leucine 65–valine 73 and lysine 88. The active-site Proton acceptor is aspartate 181. The tract at residues serine 368–aspartate 402 is disordered. Residues histidine 384 to aspartate 393 are compositionally biased toward basic and acidic residues. Residues alanine 654–glutamate 682 adopt a coiled-coil conformation. Residues glutamate 1194–lysine 1205 show a composition bias toward basic and acidic residues. A disordered region spans residues glutamate 1194–serine 1336. The span at threonine 1213–asparagine 1236 shows a compositional bias: polar residues. 2 stretches are compositionally biased toward low complexity: residues proline 1253–proline 1264 and proline 1272–serine 1285. A compositionally biased stretch (basic residues) spans serine 1315–proline 1327.

Belongs to the protein kinase superfamily. Ser/Thr protein kinase family. CDC7 subfamily. Requires Mg(2+) as cofactor.

It catalyses the reaction L-seryl-[protein] + ATP = O-phospho-L-seryl-[protein] + ADP + H(+). The enzyme catalyses L-threonyl-[protein] + ATP = O-phospho-L-threonyl-[protein] + ADP + H(+). Its function is as follows. Required for early events during cytokinesis including localization of cytoskeletal components to the cytokinetic ring. This is Cytokinesis protein sepH from Aspergillus niger (strain ATCC MYA-4892 / CBS 513.88 / FGSC A1513).